We begin with the raw amino-acid sequence, 684 residues long: Chaperone protein HtpG (684 aa).

The a; substrate-binding stretch occupies residues 1-329 (MSKKGTIGVT…SPDIPLNVSR (329 aa)). The b stretch occupies residues 330–548 (SYLQSDANVK…FMRRMRDMAQ (219 aa)). Residues 549 to 684 (LQPGMSFYGE…EFIRRSQRLL (136 aa)) form a c region.

The protein belongs to the heat shock protein 90 family. As to quaternary structure, homodimer.

It localises to the cytoplasm. Molecular chaperone. Has ATPase activity. This is Chaperone protein HtpG from Porphyromonas gingivalis (strain ATCC 33277 / DSM 20709 / CIP 103683 / JCM 12257 / NCTC 11834 / 2561).